The chain runs to 352 residues: Delta(7)-sterol 5(6)-desaturas erg3A (352 aa).

An N-linked (GlcNAc...) asparagine glycan is attached at N39. The next 3 helical transmembrane spans lie at 82-102 (FLSFFLIVWIFGIIVYFISAT), 128-147 (IAQTMRSMPVMSLLTAPFLV), and 167-187 (YYSILQFPLFIAFTDFCIYWI). One can recognise a Fatty acid hydroxylase domain in the interval 174–299 (PLFIAFTDFC…FTTLWDRLGG (126 aa)). The Histidine box-1 motif lies at 188–192 (HRGLH). A Histidine box-2 motif is present at residues 201 to 205 (HKPHH). The helical transmembrane segment at 231 to 251 (HVFPFIFPLQKLAYVFLFGFI) threads the bilayer. The Histidine box-3 signature appears at 276-280 (HTMHH).

It belongs to the sterol desaturase family. The cofactor is Fe cation.

The protein resides in the endoplasmic reticulum membrane. In terms of biological role, delta(7)-sterol 5(6)-desaturase; part of the third module of ergosterol biosynthesis pathway that includes the late steps of the pathway. Erg3A is a minor delta(7)-sterol 5(6)-desaturase within the ergosterol pathway, erg3B being the major one. The third module or late pathway involves the ergosterol synthesis itself through consecutive reactions that mainly occur in the endoplasmic reticulum (ER) membrane. Firstly, the squalene synthase erg9 catalyzes the condensation of 2 farnesyl pyrophosphate moieties to form squalene, which is the precursor of all steroids. Squalene synthase is crucial for balancing the incorporation of farnesyl diphosphate (FPP) into sterol and nonsterol isoprene synthesis. Secondly, squalene is converted into lanosterol by the consecutive action of the squalene epoxidase erg1 and the lanosterol synthase erg7. Then, the delta(24)-sterol C-methyltransferase erg6 methylates lanosterol at C-24 to produce eburicol. Eburicol is the substrate of the sterol 14-alpha demethylase encoded by cyp51A and cyp51B, to yield 4,4,24-trimethyl ergosta-8,14,24(28)-trienol. The C-14 reductase erg24 then reduces the C14=C15 double bond which leads to 4,4-dimethylfecosterol. A sequence of further demethylations at C-4, involving the C-4 demethylation complex containing the C-4 methylsterol oxidases erg25A or erg25B, the sterol-4-alpha-carboxylate 3-dehydrogenase erg26 and the 3-keto-steroid reductase erg27, leads to the production of fecosterol via 4-methylfecosterol. The C-8 sterol isomerase erg2 then catalyzes the reaction which results in unsaturation at C-7 in the B ring of sterols and thus converts fecosterol to episterol. The sterol-C5-desaturase erg3B then catalyzes the introduction of a C-5 double bond in the B ring to produce 5-dehydroepisterol. The 2 other sterol-C5-desaturases, erg3A and erg3C, seem to be less important in ergosterol biosynthesis. The C-22 sterol desaturase erg5 further converts 5-dehydroepisterol into ergosta-5,7,22,24(28)-tetraen-3beta-ol by forming the C-22(23) double bond in the sterol side chain. Finally, ergosta-5,7,22,24(28)-tetraen-3beta-ol is substrate of the C-24(28) sterol reductases erg4A and erg4B to produce ergosterol. Possible alternative sterol biosynthetic pathways might exist from fecosterol to ergosterol, depending on the activities of the erg3 isoforms. This Aspergillus fumigatus (strain ATCC MYA-4609 / CBS 101355 / FGSC A1100 / Af293) (Neosartorya fumigata) protein is Delta(7)-sterol 5(6)-desaturas erg3A.